A 458-amino-acid chain; its full sequence is Glutamyl-tRNA(Gln) amidotransferase subunit D (458 aa).

The Asparaginase/glutaminase domain maps to 97 to 434 (PNVSVMSTGG…KEVERLMRTN (338 aa)). Catalysis depends on residues T107, T185, D186, and K264.

It belongs to the asparaginase 1 family. GatD subfamily. In terms of assembly, heterodimer of GatD and GatE.

It carries out the reaction L-glutamyl-tRNA(Gln) + L-glutamine + ATP + H2O = L-glutaminyl-tRNA(Gln) + L-glutamate + ADP + phosphate + H(+). In terms of biological role, allows the formation of correctly charged Gln-tRNA(Gln) through the transamidation of misacylated Glu-tRNA(Gln) in organisms which lack glutaminyl-tRNA synthetase. The reaction takes place in the presence of glutamine and ATP through an activated gamma-phospho-Glu-tRNA(Gln). The GatDE system is specific for glutamate and does not act on aspartate. The polypeptide is Glutamyl-tRNA(Gln) amidotransferase subunit D (Methanopyrus kandleri (strain AV19 / DSM 6324 / JCM 9639 / NBRC 100938)).